A 250-amino-acid chain; its full sequence is Probable transcriptional regulatory protein Cphamn1_0542 (250 aa).

Belongs to the TACO1 family.

The protein localises to the cytoplasm. This chain is Probable transcriptional regulatory protein Cphamn1_0542, found in Chlorobium phaeobacteroides (strain BS1).